A 688-amino-acid chain; its full sequence is Zinc finger and BTB domain-containing protein 48 (688 aa).

The BTB domain occupies 26–89; that stretch reads CDATLDVGGL…FYTGHLALTS (64 aa). The disordered stretch occupies residues 119–140; sequence SVGQAAGGQSGLGPPASQNVNS. Lysine 143 participates in a covalent cross-link: Glycyl lysine isopeptide (Lys-Gly) (interchain with G-Cter in SUMO2). The interval 161–192 is disordered; sequence PRDQEPRGSHSPQRPQLHSPAQSEGPSSLCGK. Residues serine 169, serine 171, and serine 179 each carry the phosphoserine modification. The span at 170–186 shows a compositional bias: polar residues; that stretch reads HSPQRPQLHSPAQSEGP. A Glycyl lysine isopeptide (Lys-Gly) (interchain with G-Cter in SUMO2) cross-link involves residue lysine 263. A C2H2-type 1 zinc finger spans residues 291-313; it reads VECPTCHKKFLSKYYLKVHNRKH. Zn(2+) contacts are provided by cysteine 293, cysteine 296, histidine 309, histidine 313, cysteine 321, cysteine 324, histidine 337, cysteine 342, cysteine 352, cysteine 355, histidine 368, histidine 372, cysteine 380, cysteine 383, histidine 396, and histidine 401. The CCHC-type zinc-finger motif lies at 319 to 344; that stretch reads FECPKCGKCYFRKENLLEHEARNCMN. 9 C2H2-type zinc fingers span residues 350-372, 378-401, 407-430, 436-459, 465-487, 493-515, 521-544, 550-572, and 578-600; these read FTCS…MVSH, YKCS…IKLH, HACP…AFKH, FVCE…KAKH, HVCE…LRTH, FQCH…NRTH, FSCE…ASRH, HFCQ…VRRH, and FECT…MEIH. Residues cysteine 552, cysteine 555, histidine 568, cysteine 580, cysteine 583, histidine 596, and histidine 600 each coordinate Zn(2+).

This sequence belongs to the krueppel C2H2-type zinc-finger protein family. As to quaternary structure, interacts with EP300. Detected in adrenal gland and neuroblastoma.

It is found in the nucleus. It localises to the chromosome. The protein localises to the telomere. Plays a critical role in transcriptional regulation and chromatin remodeling. Acts as a regulator of telomere length. Directly binds the telomeric double-stranded 5'-TTAGGG-3' repeat. Preferentially binds to telomeres that have a low concentration of shelterin complex and acts as a regulator of telomere length by initiating telomere trimming, a process that prevents the accumulation of aberrantly long telomeres. Also acts as a transcription regulator that binds to promoter regions. Regulates expression of a small subset of genes, including MTFP1. Acts as a negative regulator of cell proliferation by specifically activating expression of ARF, a tumor suppressor isoform of CDKN2A. Acts as a transcription regulator of CIITA, the major factor regulating MHC class II gene expression. In addition, regulates cellular m6A/m6Am methylation on RNA by facilitating the recruitment of the RNA demethylase, FTO, to target mRNAs. The polypeptide is Zinc finger and BTB domain-containing protein 48 (Homo sapiens (Human)).